A 357-amino-acid chain; its full sequence is UPF0283 membrane protein BAbS19_I09770 (357 aa).

Residues 1–36 (MSDKTPRKPTAFRLEQPARVSAASEQEEPRRPRAVK) are disordered. The span at 27 to 36 (EEPRRPRAVK) shows a compositional bias: basic and acidic residues. 2 helical membrane-spanning segments follow: residues 78-98 (ILFGALGILVSFAIGIWTEDL) and 109-129 (LGWTALGVAMVALAAFAAIIL).

The protein belongs to the UPF0283 family.

It localises to the cell inner membrane. In Brucella abortus (strain S19), this protein is UPF0283 membrane protein BAbS19_I09770.